The chain runs to 203 residues: Mitotic spindle checkpoint component mad2 (203 aa).

Positions 13 to 197 constitute an HORMA domain; sequence KGSSKLVSEF…TSMHKIDCQV (185 aa).

It belongs to the MAD2 family. In terms of assembly, interacts with mad3 and slp1.

Its subcellular location is the nucleus. Functionally, feedback control that prevents cells with incompletely assembled spindles from leaving mitosis. It interacts with the anaphase promoting complex/cyclosome (APC/C) thereby inhibiting APC/C-dependent proteolysis, a step required for exit from mitosis. In Schizosaccharomyces pombe (strain 972 / ATCC 24843) (Fission yeast), this protein is Mitotic spindle checkpoint component mad2.